The chain runs to 184 residues: Inosine triphosphate pyrophosphatase (184 aa).

Residue 10–15 (TGNVKK) coordinates ITP. Position 37 (E37) interacts with Mg(2+). Residues K49, 65-66 (DT), K82, 141-144 (FGWD), K164, and 169-170 (HR) each bind ITP.

This sequence belongs to the HAM1 NTPase family. In terms of assembly, homodimer. Requires Mg(2+) as cofactor. Mn(2+) serves as cofactor.

It is found in the cytoplasm. It carries out the reaction ITP + H2O = IMP + diphosphate + H(+). The catalysed reaction is dITP + H2O = dIMP + diphosphate + H(+). The enzyme catalyses XTP + H2O = XMP + diphosphate + H(+). Pyrophosphatase that hydrolyzes non-canonical purine nucleotides such as inosine triphosphate (ITP), deoxyinosine triphosphate (dITP) or xanthosine 5'-triphosphate (XTP) to their respective monophosphate derivatives. The enzyme does not distinguish between the deoxy- and ribose forms. Probably excludes non-canonical purines from RNA and DNA precursor pools, thus preventing their incorporation into RNA and DNA and avoiding chromosomal lesions. This is Inosine triphosphate pyrophosphatase from Caenorhabditis elegans.